Consider the following 502-residue polypeptide: DnaJ homolog subfamily C member 3 homolog (502 aa).

The N-terminal stretch at 1–25 (MIVNKKYFLLICIIILISINCLVLA) is a signal peptide. TPR repeat units follow at residues 29-62 (IENF…IGSD), 69-102 (VSLL…NPDN), 103-136 (IHAR…RPDN), 184-217 (KEVR…EPSS), 218-251 (VAAL…DPDN), 264-297 (FEKS…EPNS), 302-335 (TPLY…DELN), and 336-369 (ADAL…KPND). The N-linked (GlcNAc...) asparagine glycan is linked to N51. C309 and C325 are disulfide-bonded. One can recognise a J domain in the interval 390 to 457 (DYYKILGIQK…EKRKRYDMGE (68 aa)).

The protein localises to the secreted. It is found in the endoplasmic reticulum lumen. Functionally, may be involved in the unfolded protein response (UPR) during ER stress. The protein is DnaJ homolog subfamily C member 3 homolog (dnajc3) of Dictyostelium discoideum (Social amoeba).